A 475-amino-acid polypeptide reads, in one-letter code: tRNA-2-methylthio-N(6)-dimethylallyladenosine synthase (475 aa).

The MTTase N-terminal domain occupies 7-127; it reads RKLHIKSYGC…LPKLLAKARD (121 aa). Positions 16, 52, 90, 168, 172, and 175 each coordinate [4Fe-4S] cluster. One can recognise a Radical SAM core domain in the interval 154-388; it reads RARGVSAFVT…AQLQALIDAQ (235 aa). In terms of domain architecture, TRAM spans 394–456; the sequence is RAAIGRTVEV…RYSLKGRLAS (63 aa).

Belongs to the methylthiotransferase family. MiaB subfamily. As to quaternary structure, monomer. [4Fe-4S] cluster serves as cofactor.

The protein resides in the cytoplasm. The catalysed reaction is N(6)-dimethylallyladenosine(37) in tRNA + (sulfur carrier)-SH + AH2 + 2 S-adenosyl-L-methionine = 2-methylsulfanyl-N(6)-dimethylallyladenosine(37) in tRNA + (sulfur carrier)-H + 5'-deoxyadenosine + L-methionine + A + S-adenosyl-L-homocysteine + 2 H(+). Its function is as follows. Catalyzes the methylthiolation of N6-(dimethylallyl)adenosine (i(6)A), leading to the formation of 2-methylthio-N6-(dimethylallyl)adenosine (ms(2)i(6)A) at position 37 in tRNAs that read codons beginning with uridine. The polypeptide is tRNA-2-methylthio-N(6)-dimethylallyladenosine synthase (Afipia carboxidovorans (strain ATCC 49405 / DSM 1227 / KCTC 32145 / OM5) (Oligotropha carboxidovorans)).